The sequence spans 80 residues: UPF0248 protein M1425_2629 (80 aa).

Belongs to the UPF0248 family.

This chain is UPF0248 protein M1425_2629, found in Saccharolobus islandicus (strain M.14.25 / Kamchatka #1) (Sulfolobus islandicus).